A 540-amino-acid chain; its full sequence is GMP synthase [glutamine-hydrolyzing] (540 aa).

The Glutamine amidotransferase type-1 domain maps to 26 to 216 (IIIILDFGSQ…VYHICECEPT (191 aa)). Cys-103 (nucleophile) is an active-site residue. Catalysis depends on residues His-190 and Glu-192. The region spanning 217-415 (WTTAAFVEEA…VGLPEEIVQR (199 aa)) is the GMPS ATP-PPase domain. An ATP-binding site is contributed by 244-250 (SGGVDSS).

Homodimer.

The catalysed reaction is XMP + L-glutamine + ATP + H2O = GMP + L-glutamate + AMP + diphosphate + 2 H(+). Its pathway is purine metabolism; GMP biosynthesis; GMP from XMP (L-Gln route): step 1/1. Functionally, catalyzes the synthesis of GMP from XMP. In Nostoc sp. (strain PCC 7120 / SAG 25.82 / UTEX 2576), this protein is GMP synthase [glutamine-hydrolyzing].